Reading from the N-terminus, the 211-residue chain is Large ribosomal subunit protein uL3 (211 aa).

Gln-150 bears the N5-methylglutamine mark.

It belongs to the universal ribosomal protein uL3 family. Part of the 50S ribosomal subunit. Forms a cluster with proteins L14 and L19. Methylated by PrmB.

In terms of biological role, one of the primary rRNA binding proteins, it binds directly near the 3'-end of the 23S rRNA, where it nucleates assembly of the 50S subunit. In Stutzerimonas stutzeri (strain A1501) (Pseudomonas stutzeri), this protein is Large ribosomal subunit protein uL3.